Reading from the N-terminus, the 194-residue chain is Dephospho-CoA kinase (194 aa).

The DPCK domain maps to 3–194 (TIGLTGGIGS…EQVDGFWGGL (192 aa)). Position 11 to 16 (11 to 16 (GSGKST)) interacts with ATP.

It belongs to the CoaE family.

It is found in the cytoplasm. The enzyme catalyses 3'-dephospho-CoA + ATP = ADP + CoA + H(+). It participates in cofactor biosynthesis; coenzyme A biosynthesis; CoA from (R)-pantothenate: step 5/5. Functionally, catalyzes the phosphorylation of the 3'-hydroxyl group of dephosphocoenzyme A to form coenzyme A. The polypeptide is Dephospho-CoA kinase (Corynebacterium jeikeium (strain K411)).